The primary structure comprises 94 residues: Co-chaperonin GroES (94 aa).

Belongs to the GroES chaperonin family. Heptamer of 7 subunits arranged in a ring. Interacts with the chaperonin GroEL.

It is found in the cytoplasm. Together with the chaperonin GroEL, plays an essential role in assisting protein folding. The GroEL-GroES system forms a nano-cage that allows encapsulation of the non-native substrate proteins and provides a physical environment optimized to promote and accelerate protein folding. GroES binds to the apical surface of the GroEL ring, thereby capping the opening of the GroEL channel. This chain is Co-chaperonin GroES, found in Lactobacillus gasseri (strain ATCC 33323 / DSM 20243 / BCRC 14619 / CIP 102991 / JCM 1131 / KCTC 3163 / NCIMB 11718 / NCTC 13722 / AM63).